The following is a 601-amino-acid chain: Glutathione-regulated potassium-efflux system protein KefB (601 aa).

13 helical membrane passes run 4–24 (SDLLTAGVMFLFAAVAAVPLA), 29–49 (IGAVLGYLLAGIAIGPWGLGF), 55–75 (EILHFSELGVVFLMFIIGLEL), 87–107 (IFGVGAAQVMLSAVVLAGLLM), 115–135 (AAVIGGIGLAMSSTAMALQLM), 152–172 (VLLFQDLAVIPALALVPLLAG), 177–197 (HFDWIKVGMKVLAFAGMLIGG), 207–227 (FIADSGVREVFTAATLLLVLG), 230–250 (LFMDALGLSMALGTFIAGVLL), 262–282 (AIDPFKGLLLGLFFISVGMSL), 284–304 (LGVLYTHLLWVAVSVIVLVAV), 324–344 (MQFAGVLSQGGEFAFVLFSTA), and 356–376 (SLLLVTVTLSMMTTPLLMKLV). The region spanning 400-519 (KPQVIVVGFG…AGVTQFSRET (120 aa)) is the RCK N-terminal domain.

The protein belongs to the monovalent cation:proton antiporter 2 (CPA2) transporter (TC 2.A.37) family. KefB subfamily. Interacts with the regulatory subunit KefG.

It is found in the cell inner membrane. Pore-forming subunit of a potassium efflux system that confers protection against electrophiles. Catalyzes K(+)/H(+) antiport. In Citrobacter koseri (strain ATCC BAA-895 / CDC 4225-83 / SGSC4696), this protein is Glutathione-regulated potassium-efflux system protein KefB.